A 152-amino-acid chain; its full sequence is Urease accessory protein UreE (152 aa).

It belongs to the UreE family.

The protein resides in the cytoplasm. Functionally, involved in urease metallocenter assembly. Binds nickel. Probably functions as a nickel donor during metallocenter assembly. The polypeptide is Urease accessory protein UreE (Psychromonas ingrahamii (strain DSM 17664 / CCUG 51855 / 37)).